We begin with the raw amino-acid sequence, 159 residues long: Vesicle transport protein SFT2A (159 aa).

Over 1–36 (MEKLRRVLSGQDDEEQGLTAQVLDASSLSFNTRLKW) the chain is Cytoplasmic. The residue at position 9 (serine 9) is a Phosphoserine. The helical transmembrane segment at 37–57 (FAICFVCGVFFSILGTGLLWL) threads the bilayer. Residues 58–62 (PGGIK) are Lumenal-facing. Residues 63 to 83 (LFAVFYTLGNLAALASTCFLM) traverse the membrane as a helical segment. At 84-97 (GPVKQLKKMFEATR) the chain is on the cytoplasmic side. Residues 98 to 118 (LLATIVMLLCFIFTLCAALWW) traverse the membrane as a helical segment. Over 119 to 122 (HKKG) the chain is Lumenal. Residues 123–143 (LAVLFCILQFLSMTWYSLSYI) traverse the membrane as a helical segment. The Cytoplasmic portion of the chain corresponds to 144–159 (PYARDAVIKCCSSLLS).

Belongs to the SFT2 family.

The protein resides in the membrane. Functionally, may be involved in fusion of retrograde transport vesicles derived from an endocytic compartment with the Golgi complex. The polypeptide is Vesicle transport protein SFT2A (Homo sapiens (Human)).